Consider the following 145-residue polypeptide: Ribosome maturation factor RimP (145 aa).

Belongs to the RimP family.

The protein resides in the cytoplasm. Its function is as follows. Required for maturation of 30S ribosomal subunits. This Borreliella afzelii (strain PKo) (Borrelia afzelii) protein is Ribosome maturation factor RimP.